The sequence spans 492 residues: Zn(2)-C6 fungal-type transcription factor (492 aa).

The segment at residues 14–41 (CRRCKNRKIKCDEVHPRCGNCAKHGVPC) is a DNA-binding region (zn(2)-C6 fungal-type). The segment at 58–119 (TSTESVGAPT…QPSISSSTNT (62 aa)) is disordered. Low complexity predominate over residues 78-95 (SAPRTPLTRPRAPSSPAR). Threonine 82 carries the post-translational modification Phosphothreonine. Residues serine 92 and serine 102 each carry the phosphoserine modification. Polar residues predominate over residues 107–119 (VYSQPSISSSTNT). Threonine 217 bears the Phosphothreonine mark. Phosphoserine is present on serine 305.

Interacts with HOG1. Post-translationally, phosphorylation at Thr-82, Ser-92, Ser-102, thr-117 and ser-305 by HOG1 is required for regulating expression of ergosterol biosynthesis genes.

It localises to the nucleus. Functionally, transcription factor that targets gene promoters containing 2 conserved CGAA repeat sequences. Positively regulates the expression of ergosterol biosynthesis genes including CYP51A and CYP51B encoding the sterol 14-alpha demethylase, and ERG6A and ERG6B encoding the sterol 24-C-methyltransferase. This is Zn(2)-C6 fungal-type transcription factor from Gibberella zeae (strain ATCC MYA-4620 / CBS 123657 / FGSC 9075 / NRRL 31084 / PH-1) (Wheat head blight fungus).